We begin with the raw amino-acid sequence, 224 residues long: CMRF35-like molecule 6 (224 aa).

A signal peptide spans 1-20 (MTARAWASWRSSALLLLLVP). The Extracellular portion of the chain corresponds to 21–183 (GYFPLSHPMT…HPGSLFSNVR (163 aa)). The 109-residue stretch at 22–130 (YFPLSHPMTV…HDPIVEVEVS (109 aa)) folds into the Ig-like V-type domain. Cystine bridges form between Cys43–Cys110 and Cys57–Cys65. Residues Asn90 and Asn99 are each glycosylated (N-linked (GlcNAc...) asparagine). Residues 136–151 (TTTASSPQSSMGTSGP) are compositionally biased toward polar residues. The tract at residues 136–174 (TTTASSPQSSMGTSGPPTKLPVHTWPSVTRKDSPEPSPH) is disordered. A helical transmembrane segment spans residues 184-204 (FLLLVLLELPLLLSMLGAVLW). Residues 205–224 (VNRPQRSSRSRQNWPKGENQ) lie on the Cytoplasmic side of the membrane.

Belongs to the CD300 family. Present on the surface of monocytes, neutrophils, a proportion of peripheral blood T- and B-lymphocytes and lymphocytic cell lines.

It localises to the cell membrane. This Homo sapiens (Human) protein is CMRF35-like molecule 6 (CD300C).